Reading from the N-terminus, the 90-residue chain is Phosphoribosyl-ATP pyrophosphatase (90 aa).

This sequence belongs to the PRA-PH family.

It is found in the cytoplasm. The enzyme catalyses 1-(5-phospho-beta-D-ribosyl)-ATP + H2O = 1-(5-phospho-beta-D-ribosyl)-5'-AMP + diphosphate + H(+). It participates in amino-acid biosynthesis; L-histidine biosynthesis; L-histidine from 5-phospho-alpha-D-ribose 1-diphosphate: step 2/9. The sequence is that of Phosphoribosyl-ATP pyrophosphatase from Streptomyces griseus subsp. griseus (strain JCM 4626 / CBS 651.72 / NBRC 13350 / KCC S-0626 / ISP 5235).